The following is a 1617-amino-acid chain: Mitogen-activated protein kinase kinae kinase bck1 (1617 aa).

9 disordered regions span residues 1 to 73, 167 to 199, 211 to 253, 345 to 399, 455 to 555, 568 to 633, 739 to 820, 832 to 1144, and 1164 to 1277; these read MDGQ…SQLQ, GPVH…RTMP, SVAS…GGMS, RQIH…SPNL, DHRR…SSSY, KRSK…LRGK, GVPL…ISPE, EHKR…RGDI, and DIDL…EILR. Positions 19–28 are enriched in low complexity; that stretch reads TQPSQSHMLS. Residues 44-60 are compositionally biased toward pro residues; it reads VMPPPPPGPPPGPPPGP. The span at 220–248 shows a compositional bias: polar residues; it reads TAQNHQSQTGQTNEPTKSPSHRQNNSNTL. A compositionally biased stretch (polar residues) spans 482 to 504; it reads KSGSPATQHATLNQGLSSSSTGD. Positions 524-533 are enriched in basic and acidic residues; the sequence is RYYESRKGQE. Composition is skewed to polar residues over residues 535-555 and 586-596; these read IRPS…SSSY and ESPTSPVNLRQ. Composition is skewed to basic and acidic residues over residues 832 to 841 and 871 to 885; these read EHKREVERKQ and FDER…KKAD. 2 stretches are compositionally biased toward polar residues: residues 897-907 and 956-980; these read PQESYTLTRIN and GGKQ…PQSS. Basic and acidic residues-rich tracts occupy residues 1128–1140 and 1189–1198; these read EDER…DSFA and PENDLHKKEN. Composition is skewed to polar residues over residues 1199–1208 and 1257–1272; these read QPSSSYTGEM and NQAS…NQKS. The Protein kinase domain maps to 1323 to 1596; that stretch reads IIRGQLIGKG…QTLLTRHPFC (274 aa). ATP-binding positions include 1329-1337 and lysine 1352; that span reads IGKGTYGRV. The active-site Proton acceptor is aspartate 1453.

This sequence belongs to the protein kinase superfamily. STE Ser/Thr protein kinase family. MAP kinase kinase subfamily.

It catalyses the reaction L-seryl-[protein] + ATP = O-phospho-L-seryl-[protein] + ADP + H(+). The enzyme catalyses L-threonyl-[protein] + ATP = O-phospho-L-threonyl-[protein] + ADP + H(+). Functionally, mitogen-activated kinase kinase kinase (MAPKKK), part of the cell wall integrity (CWI) signaling pathway composed by three protein kinases bck1, mkk2 and mpkA and responsible for the maintaining of cell-wall integrity balance. The CWI pathway also regulates the oxidative stress response, as well as the production of some secondary metabolites including pyomelanin. This Aspergillus fumigatus (strain CBS 144.89 / FGSC A1163 / CEA10) (Neosartorya fumigata) protein is Mitogen-activated protein kinase kinae kinase bck1.